The primary structure comprises 352 residues: Ion-translocating oxidoreductase complex subunit D (352 aa).

4 helical membrane-spanning segments follow: residues 20-40 (IMLL…WFFG), 42-62 (GTLV…ALVL), 89-109 (IPPL…AIIA), and 123-143 (PAMI…TSWL). Thr187 carries the FMN phosphoryl threonine modification. 5 helical membrane-spanning segments follow: residues 214–234 (ILAG…GLWL), 242–262 (WHIP…GWLF), 267–287 (LAAP…FFIL), 301–321 (LIFG…GGYP), and 322–342 (DGVA…DYYT).

This sequence belongs to the NqrB/RnfD family. In terms of assembly, the complex is composed of six subunits: RsxA, RsxB, RsxC, RsxD, RsxE and RsxG. Requires FMN as cofactor.

The protein resides in the cell inner membrane. Functionally, part of a membrane-bound complex that couples electron transfer with translocation of ions across the membrane. Required to maintain the reduced state of SoxR. The polypeptide is Ion-translocating oxidoreductase complex subunit D (Escherichia coli (strain ATCC 8739 / DSM 1576 / NBRC 3972 / NCIMB 8545 / WDCM 00012 / Crooks)).